The sequence spans 392 residues: Sterol methyltransferase-like 3 (392 aa).

A helical transmembrane segment spans residues valine 20 to serine 42.

It belongs to the class I-like SAM-binding methyltransferase superfamily. Erg6/SMT family.

Its subcellular location is the microsome membrane. Unable to convert squalene, botryococcene, cycloartenol, zymosterol or lanosterol to mono-, di-, tri- or tetramethylated derivatives. This chain is Sterol methyltransferase-like 3 (SMT-3), found in Botryococcus braunii (Green alga).